The chain runs to 275 residues: Centromere protein V (275 aa).

2 stretches are compositionally biased toward low complexity: residues 1-10 (MRRSRSSAAA) and 17-51 (RSGASGASAAPAASAAAALAPSATRTRRSASQAGS). Residues 1–109 (MRRSRSSAAA…ATPTSSASNL (109 aa)) form a disordered region. S18 and S21 each carry phosphoserine. R43 carries the omega-N-methylarginine modification. The segment covering 79-100 (GEPPPPELALLPPPPPPPPTPA) has biased composition (pro residues). T98, T101, and T103 each carry phosphothreonine. Positions 148 to 260 (HTGGCHCGAV…TEEFNGSDWE (113 aa)) constitute a CENP-V/GFA domain. C152, C154, C172, C174, C177, C216, and C219 together coordinate Zn(2+). Residue S257 is modified to Phosphoserine.

This sequence belongs to the Gfa family. Zn(2+) is required as a cofactor.

It is found in the chromosome. Its subcellular location is the centromere. It localises to the kinetochore. The protein resides in the nucleus. The protein localises to the cytoplasm. It is found in the cytoskeleton. Its subcellular location is the spindle. Its function is as follows. Required for distribution of pericentromeric heterochromatin in interphase nuclei and for centromere formation and organization, chromosome alignment and cytokinesis. This Homo sapiens (Human) protein is Centromere protein V (CENPV).